Consider the following 904-residue polypeptide: Myelin regulatory factor-like protein (904 aa).

The disordered stretch occupies residues leucine 46–serine 132. A compositionally biased stretch (polar residues) spans proline 100–proline 117. Positions threonine 108–serine 400 form a DNA-binding region, NDT80. A Peptidase S74 domain is found at serine 446–isoleucine 554. A coiled-coil region spans residues glycine 538–lysine 575. Residues leucine 624–isoleucine 644 form a helical membrane-spanning segment. Positions asparagine 656–threonine 688 are disordered. The segment covering threonine 663–threonine 688 has biased composition (low complexity).

The protein belongs to the MRF family.

It is found in the membrane. The polypeptide is Myelin regulatory factor-like protein (Myrfl) (Mus musculus (Mouse)).